A 354-amino-acid polypeptide reads, in one-letter code: UDP-3-O-acylglucosamine N-acyltransferase (354 aa).

The active-site Proton acceptor is His-258.

It belongs to the transferase hexapeptide repeat family. LpxD subfamily. In terms of assembly, homotrimer.

The enzyme catalyses a UDP-3-O-[(3R)-3-hydroxyacyl]-alpha-D-glucosamine + a (3R)-hydroxyacyl-[ACP] = a UDP-2-N,3-O-bis[(3R)-3-hydroxyacyl]-alpha-D-glucosamine + holo-[ACP] + H(+). Its pathway is bacterial outer membrane biogenesis; LPS lipid A biosynthesis. Catalyzes the N-acylation of UDP-3-O-acylglucosamine using 3-hydroxyacyl-ACP as the acyl donor. Is involved in the biosynthesis of lipid A, a phosphorylated glycolipid that anchors the lipopolysaccharide to the outer membrane of the cell. This Sinorhizobium fredii (strain NBRC 101917 / NGR234) protein is UDP-3-O-acylglucosamine N-acyltransferase.